Consider the following 528-residue polypeptide: Lanosterol 14-alpha demethylase (528 aa).

Cys470 is a binding site for heme.

This sequence belongs to the cytochrome P450 family. The cofactor is heme.

Its subcellular location is the membrane. It carries out the reaction a 14alpha-methyl steroid + 3 reduced [NADPH--hemoprotein reductase] + 3 O2 = a Delta(14) steroid + formate + 3 oxidized [NADPH--hemoprotein reductase] + 4 H2O + 4 H(+). The enzyme catalyses a 14alpha-methyl steroid + reduced [NADPH--hemoprotein reductase] + O2 = a 14alpha-hydroxymethyl steroid + oxidized [NADPH--hemoprotein reductase] + H2O + H(+). It catalyses the reaction a 14alpha-hydroxymethyl steroid + reduced [NADPH--hemoprotein reductase] + O2 = a 14alpha-formyl steroid + oxidized [NADPH--hemoprotein reductase] + 2 H2O + H(+). The catalysed reaction is a 14alpha-formyl steroid + reduced [NADPH--hemoprotein reductase] + O2 = a Delta(14) steroid + formate + oxidized [NADPH--hemoprotein reductase] + H2O + 2 H(+). It carries out the reaction lanosterol + 3 reduced [NADPH--hemoprotein reductase] + 3 O2 = 4,4-dimethyl-5alpha-cholesta-8,14,24-trien-3beta-ol + formate + 3 oxidized [NADPH--hemoprotein reductase] + 4 H2O + 4 H(+). The enzyme catalyses lanosterol + reduced [NADPH--hemoprotein reductase] + O2 = 32-hydroxylanosterol + oxidized [NADPH--hemoprotein reductase] + H2O + H(+). It catalyses the reaction 32-hydroxylanosterol + reduced [NADPH--hemoprotein reductase] + O2 = 32-oxolanosterol + oxidized [NADPH--hemoprotein reductase] + 2 H2O + H(+). The catalysed reaction is 32-oxolanosterol + reduced [NADPH--hemoprotein reductase] + O2 = 4,4-dimethyl-5alpha-cholesta-8,14,24-trien-3beta-ol + formate + oxidized [NADPH--hemoprotein reductase] + H2O + 2 H(+). It carries out the reaction eburicol + 3 reduced [NADPH--hemoprotein reductase] + 3 O2 = 14-demethyleburicol + formate + 3 oxidized [NADPH--hemoprotein reductase] + 4 H2O + 4 H(+). The enzyme catalyses eburicol + reduced [NADPH--hemoprotein reductase] + O2 = 32-hydroxyeburicol + oxidized [NADPH--hemoprotein reductase] + H2O + H(+). It catalyses the reaction 32-hydroxyeburicol + reduced [NADPH--hemoprotein reductase] + O2 = 32-oxoeburicol + oxidized [NADPH--hemoprotein reductase] + 2 H2O + H(+). The catalysed reaction is 32-oxoeburicol + reduced [NADPH--hemoprotein reductase] + O2 = 14-demethyleburicol + formate + oxidized [NADPH--hemoprotein reductase] + H2O + 2 H(+). It functions in the pathway steroid biosynthesis; zymosterol biosynthesis; zymosterol from lanosterol: step 1/6. Functionally, sterol 14alpha-demethylase that plays a critical role in the third module of ergosterol biosynthesis pathway, being ergosterol the major sterol component in fungal membranes that participates in a variety of functions. The third module or late pathway involves the ergosterol synthesis itself through consecutive reactions that mainly occur in the endoplasmic reticulum (ER) membrane. In filamentous fungi, during the initial step of this module, lanosterol (lanosta-8,24-dien-3beta-ol) can be metabolized to eburicol. Sterol 14alpha-demethylase catalyzes the three-step oxidative removal of the 14alpha-methyl group (C-32) of both these sterols in the form of formate, and converts eburicol and lanosterol to 14-demethyleburicol (4,4,24-trimethylergosta-8,14,24(28)-trienol) and 4,4-dimethyl-5alpha-cholesta-8,14,24-trien-3beta-ol, respectively, which are further metabolized by other enzymes in the pathway to ergosterol. Can also use substrates not intrinsic to fungi, such as 24,25-dihydrolanosterol (DHL), producing 4,4-dimethyl-8,14-cholestadien-3-beta-ol, but at lower rates than the endogenous substrates. This is Lanosterol 14-alpha demethylase (ERG11) from Candida tropicalis (Yeast).